We begin with the raw amino-acid sequence, 344 residues long: tRNA N6-adenosine threonylcarbamoyltransferase (344 aa).

Residues His-111 and His-115 each coordinate Fe cation. Substrate is bound by residues Leu-134–Gly-138, Asp-167, Gly-180, and Asn-272. Asp-300 contacts Fe cation.

Belongs to the KAE1 / TsaD family. It depends on Fe(2+) as a cofactor.

Its subcellular location is the cytoplasm. The enzyme catalyses L-threonylcarbamoyladenylate + adenosine(37) in tRNA = N(6)-L-threonylcarbamoyladenosine(37) in tRNA + AMP + H(+). Functionally, required for the formation of a threonylcarbamoyl group on adenosine at position 37 (t(6)A37) in tRNAs that read codons beginning with adenine. Is involved in the transfer of the threonylcarbamoyl moiety of threonylcarbamoyl-AMP (TC-AMP) to the N6 group of A37, together with TsaE and TsaB. TsaD likely plays a direct catalytic role in this reaction. In Idiomarina loihiensis (strain ATCC BAA-735 / DSM 15497 / L2-TR), this protein is tRNA N6-adenosine threonylcarbamoyltransferase.